We begin with the raw amino-acid sequence, 692 residues long: Catalase-B (692 aa).

Active-site residues include H69 and N142. Y356 serves as a coordination point for heme.

It belongs to the catalase family. Requires heme as cofactor.

The protein resides in the cytoplasm. It catalyses the reaction 2 H2O2 = O2 + 2 H2O. Occurs in almost all aerobically respiring organisms and serves to protect cells from the toxic effects of hydrogen peroxide. Its accumulation in prespore cells affords the spores protection from oxidation during prolonged dormancy. Required for normal developmental timing, possibly through a regulatory role in differentiation and morphogenesis. This chain is Catalase-B (catB), found in Dictyostelium discoideum (Social amoeba).